A 78-amino-acid polypeptide reads, in one-letter code: Large ribosomal subunit protein bL28 (78 aa).

The interval 1–25 (MSRVCQVTGKRPAVGNNRSHAKNAT) is disordered.

It belongs to the bacterial ribosomal protein bL28 family.

The polypeptide is Large ribosomal subunit protein bL28 (Aliivibrio fischeri (strain ATCC 700601 / ES114) (Vibrio fischeri)).